A 366-amino-acid polypeptide reads, in one-letter code: Chaperone protein DnaJ (366 aa).

The region spanning 5-69 (DYYEVLGVSK…QKRAQYDQFG (65 aa)) is the J domain. Residues 128–210 (GKELNVEIPV…CHGTGKVRKR (83 aa)) form a CR-type zinc finger. Residues cysteine 141, cysteine 144, cysteine 158, cysteine 161, cysteine 184, cysteine 187, cysteine 198, and cysteine 201 each contribute to the Zn(2+) site. CXXCXGXG motif repeat units lie at residues 141–148 (CDTCHGSG), 158–165 (CKYCSGTG), 184–191 (CRHCSGTG), and 198–205 (CTTCHGTG).

It belongs to the DnaJ family. In terms of assembly, homodimer. Zn(2+) serves as cofactor.

It is found in the cytoplasm. In terms of biological role, participates actively in the response to hyperosmotic and heat shock by preventing the aggregation of stress-denatured proteins and by disaggregating proteins, also in an autonomous, DnaK-independent fashion. Unfolded proteins bind initially to DnaJ; upon interaction with the DnaJ-bound protein, DnaK hydrolyzes its bound ATP, resulting in the formation of a stable complex. GrpE releases ADP from DnaK; ATP binding to DnaK triggers the release of the substrate protein, thus completing the reaction cycle. Several rounds of ATP-dependent interactions between DnaJ, DnaK and GrpE are required for fully efficient folding. Also involved, together with DnaK and GrpE, in the DNA replication of plasmids through activation of initiation proteins. In Bacillus cytotoxicus (strain DSM 22905 / CIP 110041 / 391-98 / NVH 391-98), this protein is Chaperone protein DnaJ.